Consider the following 1121-residue polypeptide: Potassium channel subfamily U member 1 (1121 aa).

At 1–24 (MSQTLLDSLNQKELTETSCTIEIQ) the chain is on the extracellular side. A helical membrane pass occupies residues 25 to 45 (AAFILSSLATFFGGLIILFLF). Residues 46 to 101 (RIALKSSRSWKYVKGPRGLLELFSSRRIEANPLRKLYFHGVFRQRIEMLLSAQTVV) are Cytoplasmic-facing. The chain crosses the membrane as a helical span at residues 102-122 (GQVLVILVFVLSIGSLVIYFI). The Extracellular segment spans residues 123 to 137 (NSMDPVRRCSSYEDK). A helical transmembrane segment spans residues 138–158 (IVHVDLSFNAFFSFYFGLRFW). The Cytoplasmic segment spans residues 159-165 (AAEDKIK). A helical membrane pass occupies residues 166-186 (FWLEMNSIVDIFTIPPTFISY). Over 187 to 188 (YL) the chain is Extracellular. The chain crosses the membrane as a helical; Voltage-sensor span at residues 189–209 (KSNWLGLRFLRALRLLELPKI). Residues 210-226 (LQILQVIKTSNSVKLSK) are Cytoplasmic-facing. Residues 227-247 (LLSIVISTWFTAAGFLHLVEN) traverse the membrane as a helical segment. The Extracellular portion of the chain corresponds to 248–259 (SGDPWLNGRNSQ). Positions 260–282 (TMSYFESIYLVTATMSTVGFGDV) form an intramembrane region, pore-forming. The Selectivity for potassium signature appears at 276 to 279 (TVGF). The Extracellular portion of the chain corresponds to 283 to 290 (VAKTSLGR). The chain crosses the membrane as a helical span at residues 291-311 (IFIVFFTLGSLILFANYIPEM). Residues 312 to 1121 (VELFSTRKKY…LDASDIVQEK (810 aa)) lie on the Cytoplasmic side of the membrane. RCK N-terminal domains lie at 331-473 (KKFI…DNIL) and 718-889 (QNHI…DGML). 2 disordered regions span residues 836 to 858 (SPTP…KERK) and 1052 to 1076 (DSSP…GSNF).

It belongs to the potassium channel family. Calcium-activated (TC 1.A.1.3) subfamily. KCa5.1/KCNU1 sub-subfamily. Homotetramer; which constitutes the calcium-activated potassium channel. Interact with LRRC52; this interaction changes some channel gating properties, such as shifting gating to more negative potentials at a given pH. As to expression, testis-specific. Mainly expressed in spermatocytes. In terms of tissue distribution, expressed in testis, brain, eye and kidney.

The protein localises to the cell membrane. It localises to the cytoplasm. It catalyses the reaction K(+)(in) = K(+)(out). With respect to regulation, regulated by changes in cytosolic pH; activated by alkalization. In contrast to human KCNU1 is not activated by Ca(2+) or Mg(2+). The auxiliary subunit LRRC52 shifts the activation of KCNU1 to more negative potentials at a given pH. Testis-specific potassium channel activated by both intracellular pH and membrane voltage that mediates export of K(+). Represents the primary spermatozoan K(+) current. The channel underlies a pH-triggered membrane hyperpolarization during the process of sperm capacitation, as sperm encounter the alkaline environment near the ovum in the female reproductive tract, thereby playing an essential for male fertility. This chain is Potassium channel subfamily U member 1 (Kcnu1), found in Mus musculus (Mouse).